A 539-amino-acid polypeptide reads, in one-letter code: Chaperonin GroEL 1 (539 aa).

ATP contacts are provided by residues 29–32 (TLGP), 86–90 (DGTTT), glycine 413, 478–480 (NAA), and aspartate 494. The tract at residues 520–539 (IVDKPAEPEDDGHGHHGHAH) is disordered. Positions 523–533 (KPAEPEDDGHG) are enriched in basic and acidic residues.

It belongs to the chaperonin (HSP60) family. As to quaternary structure, forms a cylinder of 14 subunits composed of two heptameric rings stacked back-to-back. Interacts with the co-chaperonin GroES.

The protein resides in the cytoplasm. The enzyme catalyses ATP + H2O + a folded polypeptide = ADP + phosphate + an unfolded polypeptide.. Its function is as follows. Together with its co-chaperonin GroES, plays an essential role in assisting protein folding. The GroEL-GroES system forms a nano-cage that allows encapsulation of the non-native substrate proteins and provides a physical environment optimized to promote and accelerate protein folding. The chain is Chaperonin GroEL 1 from Mycobacterium ulcerans (strain Agy99).